Here is a 190-residue protein sequence, read N- to C-terminus: Bifunctional D-Ala-D-Ala dipeptidase and D-Ala-D-Ala carboxypeptidase VanXYC (190 aa).

Residue Glu-66 participates in Mg(2+) binding. A dipeptide-binding residues include Gln-67, Ala-88, Ser-93, His-95, and Asp-102. Cu(2+) is bound by residues His-95 and Asp-102. Zn(2+) contacts are provided by His-95 and Asp-102. The active-site catalytic acid/base residue is the Glu-153. A dipeptide contacts are provided by Trp-155 and His-156. Residue His-156 participates in Cu(2+) binding. His-156 is a Zn(2+) binding site.

This sequence belongs to the peptidase M15D family. As to quaternary structure, homodimer.

Its subcellular location is the cytoplasm. It carries out the reaction D-alanyl-D-alanine + H2O = 2 D-alanine. It catalyses the reaction UDP-N-acetyl-alpha-D-muramoyl-L-alanyl-gamma-D-glutamyl-L-lysyl-D-alanyl-D-alanine + H2O = UDP-N-acetyl-alpha-D-muramoyl-L-alanyl-gamma-D-glutamyl-L-lysyl-D-alanine + D-alanine. Functionally, bifunctional enzyme, exhibiting dipeptidase and carboxypeptidase activities. Catalyzes hydrolysis of the D-alanyl-D-alanine dipeptide. Cleaves the C-terminal D-alanine residue of UDP-muramyl-pentapeptide[Ala] (UDP-MurNAc-L-Ala-D-Glu-L-Lys-D-Ala-D-Ala). Shows no activity against the pentapeptide with a C-terminal D-serine residue. Together with VanC/VanC1 and VanT, required for vancomycin resistance in E.gallinarum strain BM4174. This chain is Bifunctional D-Ala-D-Ala dipeptidase and D-Ala-D-Ala carboxypeptidase VanXYC, found in Enterococcus gallinarum.